The following is a 172-amino-acid chain: 3-hydroxydecanoyl-[acyl-carrier-protein] dehydratase (172 aa).

Residue His-71 is part of the active site.

This sequence belongs to the thioester dehydratase family. FabA subfamily. As to quaternary structure, homodimer.

The protein resides in the cytoplasm. It carries out the reaction a (3R)-hydroxyacyl-[ACP] = a (2E)-enoyl-[ACP] + H2O. The catalysed reaction is (3R)-hydroxydecanoyl-[ACP] = (2E)-decenoyl-[ACP] + H2O. The enzyme catalyses (2E)-decenoyl-[ACP] = (3Z)-decenoyl-[ACP]. The protein operates within lipid metabolism; fatty acid biosynthesis. Necessary for the introduction of cis unsaturation into fatty acids. Catalyzes the dehydration of (3R)-3-hydroxydecanoyl-ACP to E-(2)-decenoyl-ACP and then its isomerization to Z-(3)-decenoyl-ACP. Can catalyze the dehydratase reaction for beta-hydroxyacyl-ACPs with saturated chain lengths up to 16:0, being most active on intermediate chain length. The chain is 3-hydroxydecanoyl-[acyl-carrier-protein] dehydratase from Proteus mirabilis (strain HI4320).